Here is a 217-residue protein sequence, read N- to C-terminus: Ribosomal RNA small subunit methyltransferase G (217 aa).

Residues glycine 79, leucine 84, 130–131 (IE), and arginine 145 contribute to the S-adenosyl-L-methionine site.

The protein belongs to the methyltransferase superfamily. RNA methyltransferase RsmG family.

It localises to the cytoplasm. It catalyses the reaction guanosine(527) in 16S rRNA + S-adenosyl-L-methionine = N(7)-methylguanosine(527) in 16S rRNA + S-adenosyl-L-homocysteine. Specifically methylates the N7 position of guanine in position 527 of 16S rRNA. The chain is Ribosomal RNA small subunit methyltransferase G from Hahella chejuensis (strain KCTC 2396).